Consider the following 358-residue polypeptide: MVLVATLFSLFTVSLCRSIPRSSPSSSPYTQATDLKIHDPTVINANGAYYAYGVGEHIVIHQAPGLAGPWKQIGSVLDKDSIIPKGDRAKPWAPTTIEVKGTFYCYYSVSNAGCRDSAIGVATSQSPGPGGWTDHGAIVQSGTGQGSDEHPFNEVNAIDPAVLVTGDKGHLVFGSYWSGIWQVPLNEDFSSVGNTTGLNAHHLAKHPKTERVNSQDQNPDPLCRDSSGRRPVEGAYISYHAPYYYLWLSWGQCCDYDPNNLPPSGEEYSIRVGRSESPHGPFVDKQGKELTQGGGELIYGSNNDVYAPGGQGVITVETGDILYYHYCESLFFRGLSEARLGYSYLGYVDGWPVIREAP.

The first 16 residues, 1–16 (MVLVATLFSLFTVSLC), serve as a signal peptide directing secretion. Residue D39 is the Proton acceptor of the active site. N194 carries N-linked (GlcNAc...) asparagine glycosylation. A disordered region spans residues 202-227 (HLAKHPKTERVNSQDQNPDPLCRDSS). Catalysis depends on E233, which acts as the Proton donor.

The protein belongs to the glycosyl hydrolase 43 family.

It is found in the secreted. It carries out the reaction Endohydrolysis of (1-&gt;5)-alpha-arabinofuranosidic linkages in (1-&gt;5)-arabinans.. It participates in glycan metabolism; L-arabinan degradation. In terms of biological role, endo-1,5-alpha-L-arabinanase involved in degradation of pectin. Its preferred substrate is linear 1,5-alpha-L-arabinan. The polypeptide is Probable arabinan endo-1,5-alpha-L-arabinosidase B (abnB) (Aspergillus flavus (strain ATCC 200026 / FGSC A1120 / IAM 13836 / NRRL 3357 / JCM 12722 / SRRC 167)).